Consider the following 180-residue polypeptide: Shikimate kinase (180 aa).

15–20 (GAGKTT) contributes to the ATP binding site. Mg(2+) is bound at residue T19. Substrate contacts are provided by D37, R61, and G83. An ATP-binding site is contributed by R121. A substrate-binding site is contributed by R140.

The protein belongs to the shikimate kinase family. As to quaternary structure, monomer. The cofactor is Mg(2+).

It localises to the cytoplasm. It catalyses the reaction shikimate + ATP = 3-phosphoshikimate + ADP + H(+). It participates in metabolic intermediate biosynthesis; chorismate biosynthesis; chorismate from D-erythrose 4-phosphate and phosphoenolpyruvate: step 5/7. Functionally, catalyzes the specific phosphorylation of the 3-hydroxyl group of shikimic acid using ATP as a cosubstrate. This chain is Shikimate kinase, found in Psychrobacter sp. (strain PRwf-1).